We begin with the raw amino-acid sequence, 585 residues long: Rhizobactin siderophore biosynthesis protein RhbC (585 aa).

This sequence belongs to the IucA/IucC family.

The protein operates within siderophore biosynthesis; rhizobactin biosynthesis. This is Rhizobactin siderophore biosynthesis protein RhbC (rhbC) from Rhizobium meliloti (strain 1021) (Ensifer meliloti).